Consider the following 370-residue polypeptide: tRNA-specific 2-thiouridylase MnmA (370 aa).

Residues 24-31 (AMSGGVDS) and leucine 50 contribute to the ATP site. The Nucleophile role is filled by cysteine 119. Cysteine 119 and cysteine 215 form a disulfide bridge. An ATP-binding site is contributed by glycine 143. Residues 165–167 (KDQ) are interaction with tRNA. Cysteine 215 functions as the Cysteine persulfide intermediate in the catalytic mechanism.

The protein belongs to the MnmA/TRMU family.

It is found in the cytoplasm. The enzyme catalyses S-sulfanyl-L-cysteinyl-[protein] + uridine(34) in tRNA + AH2 + ATP = 2-thiouridine(34) in tRNA + L-cysteinyl-[protein] + A + AMP + diphosphate + H(+). Functionally, catalyzes the 2-thiolation of uridine at the wobble position (U34) of tRNA, leading to the formation of s(2)U34. In Wolbachia sp. subsp. Drosophila simulans (strain wRi), this protein is tRNA-specific 2-thiouridylase MnmA.